The primary structure comprises 973 residues: Vacuolar protein sorting-associated protein 18 homolog (973 aa).

N-acetylalanine is present on Ala2. Ser3, Ser11, and Ser13 each carry phosphoserine. Lys362 bears the N6-acetyllysine mark. Residues 454 to 481 adopt a coiled-coil conformation; it reads EEIALKFLEARQEEALAEFLQRKLASLK. Residues 618 to 772 form a CHCR repeat; it reads GSRLDARQLI…VVQEEEDVQT (155 aa). A Phosphoserine modification is found at Ser689. Residues 802 to 848 are a coiled coil; that stretch reads KEAICSSLKAYNHHIQELQREMEEATASAQRIRRDLQELRGRYGTVE. The RING-type zinc finger occupies 853-947; that stretch reads CATCDFPLLN…ELVAAECVYC (95 aa). The disordered stretch occupies residues 903–929; sequence GAAPPPAKGSARAKEAEGGAATAGPSR. A Phosphoserine modification is found at Ser912.

It belongs to the VPS18 family. Core component of at least two putative endosomal tethering complexes, the homotypic fusion and vacuole protein sorting (HOPS) complex and the class C core vacuole/endosome tethering (CORVET) complex. Their common core is composed of the class C Vps proteins VPS11, VPS16, VPS18 and VPS33A, which in HOPS further associates with VPS39 and VPS41 and in CORVET with VPS8 and TGFBRAP1. Interacts with RAB5C. Interacts with HOOK1. Interacts with STX7, MON1B. Associates with adaptor protein complex 3 (AP-3) and clathrin:AP-3 complexes. Interacts with SYNPO2. Interacts with PLEKHM1. In terms of tissue distribution, ubiquitous. Expression was highest in heart and low in lung.

It localises to the late endosome membrane. It is found in the lysosome membrane. The protein localises to the early endosome. Its subcellular location is the cytoplasmic vesicle. The protein resides in the autophagosome. It localises to the clathrin-coated vesicle. In terms of biological role, plays a role in vesicle-mediated protein trafficking to lysosomal compartments including the endocytic membrane transport and autophagic pathways. Believed to act as a core component of the putative HOPS and CORVET endosomal tethering complexes which are proposed to be involved in the Rab5-to-Rab7 endosome conversion probably implicating MON1A/B, and via binding SNAREs and SNARE complexes to mediate tethering and docking events during SNARE-mediated membrane fusion. The HOPS complex is proposed to be recruited to Rab7 on the late endosomal membrane and to regulate late endocytic, phagocytic and autophagic traffic towards lysosomes. The CORVET complex is proposed to function as a Rab5 effector to mediate early endosome fusion probably in specific endosome subpopulations. Required for fusion of endosomes and autophagosomes with lysosomes. Involved in dendrite development of Pukinje cells. The sequence is that of Vacuolar protein sorting-associated protein 18 homolog from Homo sapiens (Human).